A 183-amino-acid polypeptide reads, in one-letter code: Ribosome rescue factor SmrB (183 aa).

The Smr domain occupies 98–173; sequence LDLHGLTQLQ…GDAALLVLIE (76 aa).

It belongs to the SmrB family. Associates with collided ribosomes, but not with correctly translating polysomes.

In terms of biological role, acts as a ribosome collision sensor. Detects stalled/collided disomes (pairs of ribosomes where the leading ribosome is stalled and a second ribosome has collided with it) and endonucleolytically cleaves mRNA at the 5' boundary of the stalled ribosome. Stalled/collided disomes form a new interface (primarily via the 30S subunits) that binds SmrB. Cleaved mRNA becomes available for tmRNA ligation, leading to ribosomal subunit dissociation and rescue of stalled ribosomes. The protein is Ribosome rescue factor SmrB of Escherichia coli O7:K1 (strain IAI39 / ExPEC).